The chain runs to 245 residues: Probable metal transport system ATP-binding protein CPn_0542/CP_0210/CPj0542/CpB0563 (245 aa).

One can recognise an ABC transporter domain in the interval 5 to 240 (ILAEGLAFRY…CCHPYKNQEF (236 aa)). 39-46 (GPNGGGKS) provides a ligand contact to ATP.

The protein belongs to the ABC transporter superfamily.

It is found in the cell inner membrane. Part of an ATP-driven transport system CPn0541/CPn0542/CPn0543 for a metal. Probably responsible for energy coupling to the transport system. The sequence is that of Probable metal transport system ATP-binding protein CPn_0542/CP_0210/CPj0542/CpB0563 from Chlamydia pneumoniae (Chlamydophila pneumoniae).